The sequence spans 44 residues: Protein PsbN (44 aa).

The chain crosses the membrane as a helical span at residues F6 to V26.

Belongs to the PsbN family.

It localises to the plastid. It is found in the chloroplast thylakoid membrane. In terms of biological role, may play a role in photosystem I and II biogenesis. This chain is Protein PsbN, found in Tupiella akineta (Green alga).